The chain runs to 235 residues: MKLLYEGKAKRIYETQNPNEVICEFKDSLTAFNGEKADEESGKGALNCAITTLIFEALEKEGIPTHLIKQIDETKQLVKKVDIILIEVVVRNIVAGSLAKRLGLKEGTKLPFTIVEFYYKNDDLNDPLINDDHAMVLELVKTRKELDLLREYGLKVNKFLSEFFDKVGLTLVDFKIEFGRDENGNIILADEITPDSCRLWDKKTGKKLDKDLFRFNLGNIKEAYTEVLNRLKDVK.

This sequence belongs to the SAICAR synthetase family.

The enzyme catalyses 5-amino-1-(5-phospho-D-ribosyl)imidazole-4-carboxylate + L-aspartate + ATP = (2S)-2-[5-amino-1-(5-phospho-beta-D-ribosyl)imidazole-4-carboxamido]succinate + ADP + phosphate + 2 H(+). The protein operates within purine metabolism; IMP biosynthesis via de novo pathway; 5-amino-1-(5-phospho-D-ribosyl)imidazole-4-carboxamide from 5-amino-1-(5-phospho-D-ribosyl)imidazole-4-carboxylate: step 1/2. This Nautilia profundicola (strain ATCC BAA-1463 / DSM 18972 / AmH) protein is Phosphoribosylaminoimidazole-succinocarboxamide synthase.